Reading from the N-terminus, the 85-residue chain is Large ribosomal subunit protein bL27 (85 aa).

The disordered stretch occupies residues 1-20; the sequence is MAHKKAGGSTRNGRDSESKR.

The protein belongs to the bacterial ribosomal protein bL27 family.

This is Large ribosomal subunit protein bL27 from Yersinia enterocolitica serotype O:8 / biotype 1B (strain NCTC 13174 / 8081).